Consider the following 411-residue polypeptide: Metal-binding regulatory protein cuf1 (411 aa).

The copper-fist DNA-binding region spans 1 to 40; sequence MVVINNVKMACMKCIRGHRSSTCKHNDRELFPIRPKGRPI. Residues Cys-11, Cys-14, Cys-23, and His-25 each contribute to the Zn(2+) site. The tract at residues 63–92 is disordered; it reads SRKKGSKCSTSSTTDLDSSSASNSSCSIPS. The segment covering 69–92 has biased composition (low complexity); it reads KCSTSSTTDLDSSSASNSSCSIPS.

The protein localises to the cytoplasm. It localises to the nucleus. Functionally, copper-sensing transcription factor that regulates iron uptake genes. Under copper starvation conditions activates the transcription of the copper transport genes, ctr4, ctr5 and ctr6. The chain is Metal-binding regulatory protein cuf1 (cuf1) from Schizosaccharomyces pombe (strain 972 / ATCC 24843) (Fission yeast).